Consider the following 108-residue polypeptide: ATP synthase epsilon chain (108 aa).

It belongs to the ATPase epsilon chain family. As to quaternary structure, F-type ATPases have 2 components, CF(1) - the catalytic core - and CF(0) - the membrane proton channel. CF(1) has five subunits: alpha(3), beta(3), gamma(1), delta(1), epsilon(1). CF(0) has three main subunits: a, b and c.

It is found in the cell inner membrane. Functionally, produces ATP from ADP in the presence of a proton gradient across the membrane. This is ATP synthase epsilon chain from Thermotoga maritima (strain ATCC 43589 / DSM 3109 / JCM 10099 / NBRC 100826 / MSB8).